Here is a 316-residue protein sequence, read N- to C-terminus: BTB/POZ domain-containing adapter for CUL3-mediated RhoA degradation protein 2 (316 aa).

Residues Lys28 to Gln96 enclose the BTB domain. Residues Glu268 to Pro279 are compositionally biased toward polar residues. Residues Glu268 to Glu287 form a disordered region. Ser278 is modified (phosphoserine). Ser280 is subject to Phosphoserine; by CK2.

The protein belongs to the BACURD family. Component of the BCR(TNFAIP1) E3 ubiquitin ligase complex, at least composed of CUL3, TNFAIP1/BACURD2 and RBX1. Interacts with RHOA; with a preference for RhoA-GDP. Interacts with RHOB. Interacts with PCNA. Interacts with CSNK2B. Phosphorylation at Ser-280 by CK2 facilitates the nucleus localization and increases interaction with PCNA.

The protein localises to the cytoplasm. It localises to the nucleus. Its subcellular location is the endosome. The protein operates within protein modification; protein ubiquitination. Substrate-specific adapter of a BCR (BTB-CUL3-RBX1) E3 ubiquitin-protein ligase complex involved in regulation of cytoskeleton structure. The BCR(TNFAIP1) E3 ubiquitin ligase complex mediates the ubiquitination of RHOA, leading to its degradation by the proteasome, thereby regulating the actin cytoskeleton and cell migration. Its interaction with RHOB may regulate apoptosis. May enhance the PCNA-dependent DNA polymerase delta activity. In Homo sapiens (Human), this protein is BTB/POZ domain-containing adapter for CUL3-mediated RhoA degradation protein 2 (TNFAIP1).